Consider the following 503-residue polypeptide: 4-trimethylaminobutyraldehyde dehydrogenase (503 aa).

Residues Lys-189 and Gly-241–Thr-245 each bind NAD(+). The Proton acceptor role is filled by Glu-263. The Nucleophile role is filled by Cys-297. Glu-400 is an NAD(+) binding site.

Belongs to the aldehyde dehydrogenase family. As to quaternary structure, homotetramer.

It is found in the cytoplasm. The protein localises to the cytosol. It carries out the reaction 4-(trimethylamino)butanal + NAD(+) + H2O = 4-(trimethylamino)butanoate + NADH + 2 H(+). The enzyme catalyses an aldehyde + NAD(+) + H2O = a carboxylate + NADH + 2 H(+). It functions in the pathway amine and polyamine biosynthesis; carnitine biosynthesis. Converts gamma-trimethylaminobutyraldehyde into gamma-butyrobetaine with high efficiency (in vitro). Can catalyze the irreversible oxidation of a broad range of aldehydes to the corresponding acids in an NAD-dependent reaction, but with low efficiency. The sequence is that of 4-trimethylaminobutyraldehyde dehydrogenase (aldh9A1) from Gadus morhua subsp. callarias (Baltic cod).